The primary structure comprises 291 residues: Diaminopimelate epimerase (291 aa).

2 residues coordinate substrate: Asn11 and Asn78. The active-site Proton donor is Cys87. Substrate contacts are provided by residues 88 to 89 (GN), Asn166, Asn200, and 218 to 219 (ER). The active-site Proton acceptor is Cys227. Residue 228-229 (GT) coordinates substrate.

This sequence belongs to the diaminopimelate epimerase family. Homodimer.

It localises to the cytoplasm. It carries out the reaction (2S,6S)-2,6-diaminopimelate = meso-2,6-diaminopimelate. It functions in the pathway amino-acid biosynthesis; L-lysine biosynthesis via DAP pathway; DL-2,6-diaminopimelate from LL-2,6-diaminopimelate: step 1/1. Its function is as follows. Catalyzes the stereoinversion of LL-2,6-diaminopimelate (L,L-DAP) to meso-diaminopimelate (meso-DAP), a precursor of L-lysine and an essential component of the bacterial peptidoglycan. The chain is Diaminopimelate epimerase from Mycolicibacterium smegmatis (strain ATCC 700084 / mc(2)155) (Mycobacterium smegmatis).